The following is a 348-amino-acid chain: Anthranilate phosphoribosyltransferase (348 aa).

5-phospho-alpha-D-ribose 1-diphosphate-binding positions include Gly83, 86-87 (GD), Thr91, 93-96 (NVST), 111-119 (KHGNRAASS), and Thr123. Residue Gly83 coordinates anthranilate. Ser95 provides a ligand contact to Mg(2+). Residue Asn114 coordinates anthranilate. Arg169 provides a ligand contact to anthranilate. The Mg(2+) site is built by Asp227 and Glu228.

This sequence belongs to the anthranilate phosphoribosyltransferase family. As to quaternary structure, homodimer. It depends on Mg(2+) as a cofactor.

It carries out the reaction N-(5-phospho-beta-D-ribosyl)anthranilate + diphosphate = 5-phospho-alpha-D-ribose 1-diphosphate + anthranilate. It participates in amino-acid biosynthesis; L-tryptophan biosynthesis; L-tryptophan from chorismate: step 2/5. In terms of biological role, catalyzes the transfer of the phosphoribosyl group of 5-phosphorylribose-1-pyrophosphate (PRPP) to anthranilate to yield N-(5'-phosphoribosyl)-anthranilate (PRA). The protein is Anthranilate phosphoribosyltransferase of Thermobifida fusca (strain YX).